We begin with the raw amino-acid sequence, 1136 residues long: Protein stu-1 (1136 aa).

2 HEAT repeats span residues 95 to 133 (TLPV…ERSV) and 167 to 205 (YVPT…KSDL). Disordered stretches follow at residues 524-554 (KDPH…MGAP), 567-794 (RAMA…QPQI), and 821-884 (TAGQ…LLDS). Positions 595-622 (VSSTSQASVASASTASAVPAPTKSAFGA) are enriched in low complexity. Pro residues predominate over residues 659 to 668 (PAEPASPPSK). The span at 673–683 (TVTSPKTQTLV) shows a compositional bias: polar residues. The span at 701 to 716 (SSESGIPIPVSGISSP) shows a compositional bias: low complexity. Composition is skewed to polar residues over residues 777–793 (LPTQ…QQPQ) and 822–833 (AGQTQPQSTYTS).

The protein belongs to the CLASP family. As to quaternary structure, interacts with microtubules.

The protein resides in the nucleus. The protein localises to the cytoplasm. Its subcellular location is the cytoskeleton. It localises to the spindle. Microtubule binding protein that promotes the stabilization of dynamic microtubules. Required for mitotic spindle formation. The polypeptide is Protein stu-1 (stu-1) (Neurospora crassa (strain ATCC 24698 / 74-OR23-1A / CBS 708.71 / DSM 1257 / FGSC 987)).